The chain runs to 798 residues: Phenylalanine--tRNA ligase beta subunit (798 aa).

The tRNA-binding domain occupies 39 to 148 (FDAIEPIVVG…ESFRIGARLV (110 aa)). The B5 domain maps to 402–478 (WQAPVLRFRR…RVRGMDTIEP (77 aa)). The Mg(2+) site is built by aspartate 456, aspartate 462, glutamate 465, and glutamate 466. Residues 708–798 (PVYPPVRRDI…SLVEKLPVRI (91 aa)) form the FDX-ACB domain.

This sequence belongs to the phenylalanyl-tRNA synthetase beta subunit family. Type 1 subfamily. Tetramer of two alpha and two beta subunits. Mg(2+) serves as cofactor.

The protein localises to the cytoplasm. It catalyses the reaction tRNA(Phe) + L-phenylalanine + ATP = L-phenylalanyl-tRNA(Phe) + AMP + diphosphate + H(+). The protein is Phenylalanine--tRNA ligase beta subunit of Nitratidesulfovibrio vulgaris (strain ATCC 29579 / DSM 644 / CCUG 34227 / NCIMB 8303 / VKM B-1760 / Hildenborough) (Desulfovibrio vulgaris).